The primary structure comprises 348 residues: D-alanine--D-alanine ligase (348 aa).

One can recognise an ATP-grasp domain in the interval 132 to 334 (KRVLESADIP…YAELIEELVR (203 aa)). An ATP-binding site is contributed by 162–217 (EAVLSYPVFVKPANMGSSVGISKAESEEELRAAILLALTYDSRILIEQGVLAREIE). 3 residues coordinate Mg(2+): Asp-288, Glu-301, and Asn-303.

The protein belongs to the D-alanine--D-alanine ligase family. Requires Mg(2+) as cofactor. Mn(2+) is required as a cofactor.

It is found in the cytoplasm. It catalyses the reaction 2 D-alanine + ATP = D-alanyl-D-alanine + ADP + phosphate + H(+). It participates in cell wall biogenesis; peptidoglycan biosynthesis. Cell wall formation. The polypeptide is D-alanine--D-alanine ligase (Streptococcus equi subsp. zooepidemicus (strain MGCS10565)).